Consider the following 66-residue polypeptide: Phylloseptin-S4 (66 aa).

The first 22 residues, 1–22 (MAFLKKSLFLVLFLGLVSLSIC), serve as a signal peptide directing secretion. Residues 23-46 (EEEKRETEEEEHDQEEDDKSEEKR) constitute a propeptide that is removed on maturation. Residues 25–44 (EKRETEEEEHDQEEDDKSEE) are disordered. Over residues 30 to 41 (EEEEHDQEEDDK) the composition is skewed to acidic residues. Leucine amide is present on Leu-65.

As to expression, expressed by the skin glands.

It is found in the secreted. Its subcellular location is the target cell membrane. Its function is as follows. Antimicrobial peptide with high activity against Gram-positive bacteria, moderate activity against Gram-negative bacteria, and moderate activity against fungi. Acts by causing bacterial membrane disruption inducing leakage of the intracellular content followed by cell death. It adopts an alpha-helical amphipathic structure in membrane environments. Also shows highly potent antiparasitic activity against Leishmania species. Shows moderate hemolytic activity on human erythrocytes (LC(50)=33 uM). Is also active on human monocytes (IC(50)=23 uM). This Phyllomedusa sauvagei (Sauvage's leaf frog) protein is Phylloseptin-S4.